The primary structure comprises 215 residues: UPF0319 protein VV2_0960 (215 aa).

The N-terminal stretch at 1 to 21 (MNIIKPLTCILAMSISGLATA) is a signal peptide.

The protein belongs to the UPF0319 family.

The chain is UPF0319 protein VV2_0960 from Vibrio vulnificus (strain CMCP6).